Here is a 248-residue protein sequence, read N- to C-terminus: tRNA (guanine-N(1)-)-methyltransferase (248 aa).

S-adenosyl-L-methionine-binding positions include Gly-117 and 137–142 (LGDFVL).

This sequence belongs to the RNA methyltransferase TrmD family. In terms of assembly, homodimer.

The protein resides in the cytoplasm. It carries out the reaction guanosine(37) in tRNA + S-adenosyl-L-methionine = N(1)-methylguanosine(37) in tRNA + S-adenosyl-L-homocysteine + H(+). Specifically methylates guanosine-37 in various tRNAs. In Herminiimonas arsenicoxydans, this protein is tRNA (guanine-N(1)-)-methyltransferase.